The following is a 351-amino-acid chain: MLDQLSVESIPPLLGASKAQLTHWAQTYQQPAYRGQQVHQWIYQKGVHSLSDITVLPKQWRTEIADIPVGRSQIHHRSAAQDGTVKYLLKLADGQIIETVGIPTQKRLTVCVSSQVGCPMGCDFCATGKGEYQRNLACHEIVDQVLTVQEDFQQRVGNVVFMGMGEPLLNLEQVLAAVRSLNQDVGIGQRSLTVSTVGIPKQILKLAQHQLQITLAVSLHASNQRIRTQLVPSAKHYPLEKLLKDCRAYVTQTGRRVTFEYIVLSGVNDQTEHALELAHHLRGFQSHVNLIPYNPISEVDYQRPTQKQLQQFLNSLQSQHITASIRRSRGLDKDAACGQLRATQMIDPASS.

Residue glutamate 98 is the Proton acceptor of the active site. A Radical SAM core domain is found at 104-332 (TQKRLTVCVS…ASIRRSRGLD (229 aa)). Cysteine 111 and cysteine 337 form a disulfide bridge. [4Fe-4S] cluster is bound by residues cysteine 118, cysteine 122, and cysteine 125. S-adenosyl-L-methionine-binding positions include 165–166 (GE), serine 195, 218–220 (SLH), and asparagine 294. The S-methylcysteine intermediate role is filled by cysteine 337.

It belongs to the radical SAM superfamily. RlmN family. It depends on [4Fe-4S] cluster as a cofactor.

It localises to the cytoplasm. It carries out the reaction adenosine(2503) in 23S rRNA + 2 reduced [2Fe-2S]-[ferredoxin] + 2 S-adenosyl-L-methionine = 2-methyladenosine(2503) in 23S rRNA + 5'-deoxyadenosine + L-methionine + 2 oxidized [2Fe-2S]-[ferredoxin] + S-adenosyl-L-homocysteine. It catalyses the reaction adenosine(37) in tRNA + 2 reduced [2Fe-2S]-[ferredoxin] + 2 S-adenosyl-L-methionine = 2-methyladenosine(37) in tRNA + 5'-deoxyadenosine + L-methionine + 2 oxidized [2Fe-2S]-[ferredoxin] + S-adenosyl-L-homocysteine. Specifically methylates position 2 of adenine 2503 in 23S rRNA and position 2 of adenine 37 in tRNAs. The polypeptide is Probable dual-specificity RNA methyltransferase RlmN (Acaryochloris marina (strain MBIC 11017)).